A 105-amino-acid polypeptide reads, in one-letter code: MRLIDTLMRLSAAEEFFEVLAVPYDPAVLRVARLHILRRMGERLSGTDLAALPDGAVRALARSALEAAYAEFTRTRPIDARVFQVLKTARHPRGRSFVPLSSLRR.

It belongs to the NifW family. Homotrimer; associates with NifD.

Its function is as follows. May protect the nitrogenase Fe-Mo protein from oxidative damage. The chain is Nitrogenase-stabilizing/protective protein NifW from Rhodospirillum centenum (strain ATCC 51521 / SW).